A 382-amino-acid polypeptide reads, in one-letter code: GDP-mannose-dependent alpha-(1-6)-phosphatidylinositol monomannoside mannosyltransferase (382 aa).

Residues R200, K205, I257, and E294 each coordinate GDP-alpha-D-mannose.

Belongs to the glycosyltransferase group 1 family. Glycosyltransferase 4 subfamily.

It carries out the reaction a 1,2-diacyl-sn-glycero-3-phospho-[alpha-D-mannopyranosyl-(1&lt;-&gt;6)-D-myo-inositol] + GDP-alpha-D-mannose = a 2,6-O-bis(alpha-D-mannopyranosyl)-1-phosphatidyl-1D-myo-inositol + GDP + H(+). It catalyses the reaction a 1,2-diacyl-sn-glycero-3-phospho-[alpha-D-6-acyl-mannopyranosyl-(1&lt;-&gt;6)-D-myo-inositol] + GDP-alpha-D-mannose = a 2-O-(alpha-D-mannosyl)-6-O-(6-O-acyl-alpha-D-mannosyl)-1-phosphatidyl-1D-myo-inositol + GDP + H(+). It participates in phospholipid metabolism; phosphatidylinositol metabolism. In terms of biological role, involved in the biosynthesis of phosphatidyl-myo-inositol mannosides (PIM) which are early precursors in the biosynthesis of lipomannans (LM) and lipoarabinomannans (LAM). Catalyzes the addition of a mannosyl residue from GDP-D-mannose (GDP-Man) to the position 6 of a phosphatidyl-myo-inositol bearing an alpha-1,2-linked mannose residue (PIM1) to generate phosphatidyl-myo-inositol bearing alpha-1,2- and alpha-1,6-linked mannose residues (Ac1PIM2). PimB also catalyzes the addition of a mannosyl residue from GDP-Man to the position 6 of phosphatidyl-myo-inositol bearing an acylated alpha-1,2-linked mannose residue (Ac1PIM1) to generate monoacylated phosphatidyl-myo-inositol bearing alpha-1,2- and alpha-1,6-linked mannose residues (Ac1PIM2). The addition of the second mannosyl residue by PimB preferentially occurs before the acylation of the mannosyl residue transferred by PimA. Also able to transfer a mannosyl residue from GDP-Man to the position 6 of a phosphatidyl-myo-inositol (PI), but this reaction is very slow. This Mycolicibacterium smegmatis (strain ATCC 700084 / mc(2)155) (Mycobacterium smegmatis) protein is GDP-mannose-dependent alpha-(1-6)-phosphatidylinositol monomannoside mannosyltransferase.